We begin with the raw amino-acid sequence, 312 residues long: Lipid-translocating exporter-like protein RTA1 (312 aa).

Residues 1–21 (MSPESKKITAHGSTSMPLSRT) are disordered. The span at 11–21 (HGSTSMPLSRT) shows a compositional bias: polar residues. Transmembrane regions (helical) follow at residues 29-49 (IPLTVGAIFSVIGFLQRFFLA), 61-81 (LSTMFILGAGPTYAGADYFIC), 103-123 (FITFDVLAEVCVWTGAGLLAG), 142-162 (AMITQAFLFTSFVAILASFHV), 183-203 (FMMVVHSLYASSIFIIIRSAY), and 223-243 (SLMLLNTAMFNVFHPGHILPI). N-linked (GlcNAc...) asparagine glycans are attached at residues Asn-258 and Asn-304.

The protein belongs to the lipid-translocating exporter (LTE) (TC 9.A.26.1) family.

The protein resides in the membrane. It functions in the pathway siderophore biosynthesis. Lipid-translocating exporter-like protein; part of the gene cluster that mediates the biosynthesis of hydroxamate-containing siderophores that play a critical role in virulence via intracellular iron acquisition during macrophage infection. The protein is Lipid-translocating exporter-like protein RTA1 of Ajellomyces capsulatus (Darling's disease fungus).